The chain runs to 72 residues: Toxin Acra II-1 (72 aa).

Positions valine 3–lysine 67 constitute an LCN-type CS-alpha/beta domain. Intrachain disulfides connect cysteine 18–cysteine 41, cysteine 27–cysteine 46, and cysteine 31–cysteine 48.

The protein belongs to the long (3 C-C) scorpion toxin superfamily. Sodium channel inhibitor family. Beta subfamily. As to expression, expressed by the venom gland.

It is found in the secreted. Binds to sodium channels (Nav) and affects the channel activation process. The polypeptide is Toxin Acra II-1 (Androctonus crassicauda (Arabian fat-tailed scorpion)).